The chain runs to 513 residues: PPE family protein PPE4 (513 aa).

3 helical membrane-spanning segments follow: residues 233 to 253, 277 to 297, and 309 to 329; these read IIIA…PLLF, FLLP…PIVL, and LAAA…AVTG. Disordered regions lie at residues 395–446 and 469–513; these read AAAA…ERGA and LAGD…HDSK.

It belongs to the mycobacterial PPE family.

Its subcellular location is the cell membrane. Functionally, important for the siderophore-mediated iron-acquisition function of ESX-3. The protein is PPE family protein PPE4 (PPE4) of Mycobacterium tuberculosis (strain CDC 1551 / Oshkosh).